We begin with the raw amino-acid sequence, 372 residues long: Alanine dehydrogenase 1 (372 aa).

His-94 is a catalytic residue. NAD(+) is bound at residue 170 to 200 (TYVIFGGGVAATNAANVALGLNAKVIIIELN).

Belongs to the AlaDH/PNT family.

The catalysed reaction is L-alanine + NAD(+) + H2O = pyruvate + NH4(+) + NADH + H(+). It functions in the pathway amino-acid degradation; L-alanine degradation via dehydrogenase pathway; NH(3) and pyruvate from L-alanine: step 1/1. May play a role in cell wall synthesis as L-alanine is an important constituent of the peptidoglycan layer. The chain is Alanine dehydrogenase 1 (ald1) from Staphylococcus aureus (strain MRSA252).